The chain runs to 216 residues: Endoplasmic reticulum vesicle protein 25 (216 aa).

A signal peptide spans 1 to 21 (MMVSLKSSLFFMLALLTVVHA). Residues 22–184 (LNFDIPAKTN…TNESTNERVK (163 aa)) lie on the Lumenal side of the membrane. The 117-residue stretch at 34 to 150 (PFCLREYVGE…LEPVEADIRR (117 aa)) folds into the GOLD domain. A helical transmembrane segment spans residues 185 to 205 (NFAYLTFISLFVLVIWQILYL). Topologically, residues 206 to 216 (RSFFQRKHLIP) are cytoplasmic.

The protein belongs to the EMP24/GP25L family.

It is found in the endoplasmic reticulum membrane. Its subcellular location is the golgi apparatus membrane. In terms of biological role, constituent of COPII-coated endoplasmic reticulum-derived transport vesicles. Required for efficient transport of a subset of secretory proteins to the Golgi. Facilitates retrograde transport from the Golgi to the endoplasmic reticulum. This chain is Endoplasmic reticulum vesicle protein 25 (erv25), found in Schizosaccharomyces pombe (strain 972 / ATCC 24843) (Fission yeast).